The primary structure comprises 234 residues: Phosphoglycolate phosphatase (234 aa).

Aspartate 13 serves as the catalytic Nucleophile. The Mg(2+) site is built by aspartate 13, aspartate 15, and aspartate 175.

The protein belongs to the HAD-like hydrolase superfamily. CbbY/CbbZ/Gph/YieH family. As to quaternary structure, monomer. Mg(2+) is required as a cofactor. The cofactor is chloride.

The enzyme catalyses 2-phosphoglycolate + H2O = glycolate + phosphate. It functions in the pathway organic acid metabolism; glycolate biosynthesis; glycolate from 2-phosphoglycolate: step 1/1. Specifically catalyzes the dephosphorylation of 2-phosphoglycolate. Is involved in the dissimilation of the intracellular 2-phosphoglycolate formed during the DNA repair of 3'-phosphoglycolate ends, a major class of DNA lesions induced by oxidative stress. This Pectobacterium atrosepticum (strain SCRI 1043 / ATCC BAA-672) (Erwinia carotovora subsp. atroseptica) protein is Phosphoglycolate phosphatase.